A 411-amino-acid polypeptide reads, in one-letter code: Pyruvate dehydrogenase E1 component subunit alpha, mitochondrial (411 aa).

The transit peptide at 1–29 (MFSRAVRLSRAALPIRVASQRVPIAARRS) directs the protein to the mitochondrion. Positions 111, 137, 138, 184, 186, 215, 216, 217, 244, and 246 each coordinate pyruvate. The thiamine diphosphate site is built by Y137, R138, G184, V186, D215, G216, A217, and N244. Mg(2+) is bound at residue D215. Mg(2+) contacts are provided by N244 and Y246. H311 provides a ligand contact to thiamine diphosphate.

Eukaryotic pyruvate dehydrogenase (PDH) complexes are organized as a core consisting of the oligomeric dihydrolipoamide acetyl-transferase (E2), around which are arranged multiple copies of pyruvate dehydrogenase (E1), dihydrolipoamide dehydrogenase (E3) and protein X (E3BP) bound by non-covalent bonds. The Chaetomium thermophilum PDH complex contains 60 E2 units, 12 E3BP units, about 20 E1 units, and 12 or more E3 units. The units are organized in 1 E2 60-mer, 4 E3BP trimers, about 20 E1 tetramers, and a maximum of 12 E3 dimers. Pyruvate dehydrogenase (E1) is active as a tetramer of 2 alpha and 2 beta subunits. The E3BP trimers are bound inside the icosahedral core with tetrahedral symmetry. It depends on thiamine diphosphate as a cofactor. Mg(2+) serves as cofactor.

It is found in the mitochondrion. It carries out the reaction N(6)-[(R)-lipoyl]-L-lysyl-[protein] + pyruvate + H(+) = N(6)-[(R)-S(8)-acetyldihydrolipoyl]-L-lysyl-[protein] + CO2. The 10-megadalton pyruvate dehydrogenase complex contains multiple copies of three enzymatic components: pyruvate dehydrogenase (E1), dihydrolipoamide acetyltransferase (E2) and lipoamide dehydrogenase (E3) and catalyzes the overall oxidative decarboxylation of pyruvate to form acetyl-CoA and CO(2). Within the complex, pyruvate and thiamine pyrophosphate (TPP or vitamin B1) are bound by pyruvate dehydrogenase E1 subunits alpha and beta and pyruvate is decarboxylated leading to the 2-carbon hydrohyethyl bound to TPP. The E2 component contains covalently-bound lipoyl cofactors and transfers the hydroxyethyl group from TPP to an oxidized form of covalently bound lipoamide, and the resulting acetyl group is then transferred to free coenzyme A to form acetyl-CoA and reduced dihydrolipoamide-E2. Finally, the flavoprotein dihydrolipoamide dehydrogenase (E3) re-oxidizes the lipoyl group of dihydrolipoamide-E2 to form lipoamide-E2 and NADH. A fourth subunit, E3BP, is responsible for tethering E3 in proximity to the core, forming the entire metabolon. The sequence is that of Pyruvate dehydrogenase E1 component subunit alpha, mitochondrial from Chaetomium thermophilum (strain DSM 1495 / CBS 144.50 / IMI 039719) (Thermochaetoides thermophila).